The chain runs to 185 residues: Probable RNA 2'-phosphotransferase (185 aa).

Belongs to the KptA/TPT1 family.

Functionally, removes the 2'-phosphate from RNA via an intermediate in which the phosphate is ADP-ribosylated by NAD followed by a presumed transesterification to release the RNA and generate ADP-ribose 1''-2''-cyclic phosphate (APPR&gt;P). May function as an ADP-ribosylase. This is Probable RNA 2'-phosphotransferase from Bacillus thuringiensis subsp. konkukian (strain 97-27).